Here is a 217-residue protein sequence, read N- to C-terminus: Vesicle transport through interaction with t-SNAREs homolog 1A (217 aa).

Over 1–192 (MSSDFEGYEQ…GMLRRIIQNR (192 aa)) the chain is Cytoplasmic. 2 coiled-coil regions span residues 31–92 (PDEK…KRSR) and 112–178 (ENQR…GKSS). A helical transmembrane segment spans residues 193–213 (ILLVILGIIVVITILMAITFS). The Extracellular portion of the chain corresponds to 214–217 (VRRH).

This sequence belongs to the VTI1 family. Interacts with distinct SNARE complexes that contain either STX5 or STX6. Interacts with NAPA and, to a lesser extent, with NAPG. Identified in a complex containing STX6, STX12, VAMP4 and VTI1A.

The protein resides in the cytoplasmic vesicle. The protein localises to the golgi apparatus membrane. V-SNARE that mediates vesicle transport pathways through interactions with t-SNAREs on the target membrane. These interactions are proposed to mediate aspects of the specificity of vesicle trafficking and to promote fusion of the lipid bilayers. Involved in vesicular transport from the late endosomes to the trans-Golgi network. Along with VAMP7, involved in an non-conventional RAB1-dependent traffic route to the cell surface used by KCNIP1 and KCND2. May be involved in increased cytokine secretion associated with cellular senescence. In Homo sapiens (Human), this protein is Vesicle transport through interaction with t-SNAREs homolog 1A (VTI1A).